A 366-amino-acid polypeptide reads, in one-letter code: DNA-directed RNA polymerase subunit alpha (366 aa).

The alpha N-terminal domain (alpha-NTD) stretch occupies residues 1-233 (MVREKVRVST…DLFLPFLHAE (233 aa)). The segment at 264–366 (KNEIALKSIF…KDEMGFESLE (103 aa)) is alpha C-terminal domain (alpha-CTD).

It belongs to the RNA polymerase alpha chain family. In terms of assembly, in plastids the minimal PEP RNA polymerase catalytic core is composed of four subunits: alpha, beta, beta', and beta''. When a (nuclear-encoded) sigma factor is associated with the core the holoenzyme is formed, which can initiate transcription.

It is found in the plastid. The protein localises to the chloroplast. The enzyme catalyses RNA(n) + a ribonucleoside 5'-triphosphate = RNA(n+1) + diphosphate. DNA-dependent RNA polymerase catalyzes the transcription of DNA into RNA using the four ribonucleoside triphosphates as substrates. This is DNA-directed RNA polymerase subunit alpha from Oenothera elata subsp. hookeri (Hooker's evening primrose).